Consider the following 498-residue polypeptide: Trehalose-6-phosphate synthase (498 aa).

Residue R28 coordinates D-glucose 6-phosphate. A UDP-alpha-D-glucose-binding site is contributed by 48-49; it reads GG. D-glucose 6-phosphate is bound by residues Y106 and D160. Positions 302 and 307 each coordinate UDP-alpha-D-glucose. A D-glucose 6-phosphate-binding site is contributed by R340. 405–409 is a UDP-alpha-D-glucose binding site; sequence LVAKE.

It belongs to the glycosyltransferase 20 family. In terms of assembly, homotetramer.

The catalysed reaction is ADP-alpha-D-glucose + D-glucose 6-phosphate = alpha,alpha-trehalose 6-phosphate + ADP + H(+). The enzyme catalyses CDP-alpha-D-glucose + D-glucose 6-phosphate = alpha,alpha-trehalose 6-phosphate + CDP + H(+). It catalyses the reaction GDP-alpha-D-glucose + D-glucose 6-phosphate = alpha,alpha-trehalose 6-phosphate + GDP + H(+). It carries out the reaction TDP-alpha-D-glucose + D-glucose 6-phosphate = 5-methyl-UDP + alpha,alpha-trehalose 6-phosphate + H(+). The catalysed reaction is D-glucose 6-phosphate + UDP-alpha-D-glucose = alpha,alpha-trehalose 6-phosphate + UDP + H(+). Its pathway is glycan biosynthesis; trehalose biosynthesis. Its function is as follows. Probably involved in the osmoprotection via the biosynthesis of trehalose and in the production of glycogen and alpha-glucan via the TreS-Pep2 branch involved in the biosynthesis of maltose-1-phosphate (M1P). Catalyzes the transfer of glucose from UDP-glucose (UDP-Glc) to D-glucose 6-phosphate (Glc-6-P) to form trehalose-6-phosphate. Probably also able to use ADP-Glc, CDP-Glc, GDP-Glc and TDP-Glc as glucosyl donors. This Mycobacterium leprae (strain TN) protein is Trehalose-6-phosphate synthase.